Reading from the N-terminus, the 114-residue chain is T cell receptor beta variable 6-4 (114 aa).

The signal sequence occupies residues 1-21 (MSIRLLCCVAFSLLWAGPVTA). Positions 22–114 (GITQAPTSQI…TSVYFCASSD (93 aa)) constitute an Ig-like domain. The cysteines at positions 42 and 110 are disulfide-linked.

In terms of assembly, alpha-beta TR is a heterodimer composed of an alpha and beta chain; disulfide-linked. The alpha-beta TR is associated with the transmembrane signaling CD3 coreceptor proteins to form the TR-CD3 (TcR or TCR). The assembly of alpha-beta TR heterodimers with CD3 occurs in the endoplasmic reticulum where a single alpha-beta TR heterodimer associates with one CD3D-CD3E heterodimer, one CD3G-CD3E heterodimer and one CD247 homodimer forming a stable octameric structure. CD3D-CD3E and CD3G-CD3E heterodimers preferentially associate with TR alpha and TR beta chains, respectively. The association of the CD247 homodimer is the last step of TcR assembly in the endoplasmic reticulum and is required for transport to the cell surface.

It localises to the cell membrane. In terms of biological role, v region of the variable domain of T cell receptor (TR) beta chain that participates in the antigen recognition. Alpha-beta T cell receptors are antigen specific receptors which are essential to the immune response and are present on the cell surface of T lymphocytes. Recognize peptide-major histocompatibility (MH) (pMH) complexes that are displayed by antigen presenting cells (APC), a prerequisite for efficient T cell adaptive immunity against pathogens. Binding of alpha-beta TR to pMH complex initiates TR-CD3 clustering on the cell surface and intracellular activation of LCK that phosphorylates the ITAM motifs of CD3G, CD3D, CD3E and CD247 enabling the recruitment of ZAP70. In turn ZAP70 phosphorylates LAT, which recruits numerous signaling molecules to form the LAT signalosome. The LAT signalosome propagates signal branching to three major signaling pathways, the calcium, the mitogen-activated protein kinase (MAPK) kinase and the nuclear factor NF-kappa-B (NF-kB) pathways, leading to the mobilization of transcription factors that are critical for gene expression and essential for T cell growth and differentiation. The T cell repertoire is generated in the thymus, by V-(D)-J rearrangement. This repertoire is then shaped by intrathymic selection events to generate a peripheral T cell pool of self-MH restricted, non-autoaggressive T cells. Post-thymic interaction of alpha-beta TR with the pMH complexes shapes TR structural and functional avidity. This chain is T cell receptor beta variable 6-4, found in Homo sapiens (Human).